Reading from the N-terminus, the 318-residue chain is Ubiquinone biosynthesis protein COQ9, mitochondrial (318 aa).

The N-terminal 44 residues, 1–44, are a transit peptide targeting the mitochondrion; sequence MAAAAVSGALGRAGWRLLQLRCLPVARCRQALVPRAFHASAVGL. The short motif at 16 to 31 is the SIFI-degron element; the sequence is RLLQLRCLPVARCRQA. A disordered region spans residues 44 to 98; it reads LRSSDEQKQQPPNSFSQQHSETQGAEKPDPESSHSPPRYTDQGGEEEEDYESEEQ. Residues 52-66 are compositionally biased toward polar residues; the sequence is QQPPNSFSQQHSETQ. The segment covering 86-97 has biased composition (acidic residues); that stretch reads GGEEEEDYESEE. Residue K175 is modified to N6-acetyllysine. A 1,2-diacylglycero-3-phosphoethanolamine is bound at residue R244.

The protein belongs to the COQ9 family. In terms of assembly, homodimer. Heterodimer; two heterodimers of COQ7:COQ9 come together on the same side of the lipid pseudo-bilayer and form a curved tetramer with a hydrophobic surface suitable for membrane interaction. These two tetramers assemble into a soluble octamer with a pseudo-bilayer of lipids captured within. Interacts with COQ7; this interaction allows ubiquinone (CoQ) isoprene intermediates presentation to COQ7 and facilitates the COQ7-mediated hydroxylase step. In response to mitochondrial stress, the precursor protein is ubiquitinated by the SIFI complex in the cytoplasm before mitochondrial import, leading to its degradation. Within the SIFI complex, UBR4 initiates ubiquitin chain that are further elongated or branched by KCMF1.

It localises to the mitochondrion. It participates in cofactor biosynthesis; ubiquinone biosynthesis. Functionally, membrane-associated protein that warps the membrane surface to access and bind aromatic isoprenes with high specificity, including ubiquinone (CoQ) isoprene intermediates and presents them directly to COQ7, therefore facilitating the COQ7-mediated hydroxylase step. Participates in the biosynthesis of coenzyme Q, also named ubiquinone, an essential lipid-soluble electron transporter for aerobic cellular respiration. In Homo sapiens (Human), this protein is Ubiquinone biosynthesis protein COQ9, mitochondrial.